Reading from the N-terminus, the 1314-residue chain is E3 ubiquitin-protein ligase RNF123 (1314 aa).

The residue at position 2 (alanine 2) is an N-acetylalanine. The region spanning 74 to 254 (VDSEDNESQG…VAFNFGSRPL (181 aa)) is the B30.2/SPRY domain. The tract at residues 460 to 483 (HRSSRESRDGKEAREETTEERQRR) is disordered. Over residues 462–483 (SSRESRDGKEAREETTEERQRR) the composition is skewed to basic and acidic residues. At serine 675 the chain carries Phosphoserine. Position 683 is an asymmetric dimethylarginine (arginine 683). The segment at 968–974 (WILVRLW) is interaction with NFKB1. Zn(2+) is bound by residues cysteine 1254, cysteine 1257, cysteine 1269, histidine 1271, cysteine 1274, cysteine 1277, cysteine 1288, and cysteine 1291. The RING-type zinc finger occupies 1254 to 1292 (CPICYAHPISAVFQPCGHKSCKACINQHLMNNKDCFFCK).

Component of the KPC complex composed of RNF123/KPC1 and UBAC1/KPC2. Interacts with UBAC1 and CDKN1B via its N-terminal domain. Interacts with RIGI (via N-terminus) and IFIH1 (via N-terminus). Ubiquitinated, leading to its degradation. Deubiquitinated by USP19, thereby stimulating CDKN1B ubiquitin-dependent degradation.

It is found in the cytoplasm. It carries out the reaction S-ubiquitinyl-[E2 ubiquitin-conjugating enzyme]-L-cysteine + [acceptor protein]-L-lysine = [E2 ubiquitin-conjugating enzyme]-L-cysteine + N(6)-ubiquitinyl-[acceptor protein]-L-lysine.. It participates in protein modification; protein ubiquitination. Its function is as follows. Catalytic subunit of the KPC complex that acts as E3 ubiquitin-protein ligase. Promotes the ubiquitination and proteasome-mediated degradation of CDKN1B which is the cyclin-dependent kinase inhibitor at the G0-G1 transition of the cell cycle. Also acts as a key regulator of the NF-kappa-B signaling by promoting maturation of the NFKB1 component of NF-kappa-B: acts by catalyzing ubiquitination of the NFKB1 p105 precursor, leading to limited proteasomal degradation of NFKB1 p105 and generation of the active NFKB1 p50 subunit. Functions also as an inhibitor of innate antiviral signaling mediated by RIGI and IFIH1 independently of its E3 ligase activity. Interacts with the N-terminal CARD domains of RIGI and IFIH1 and competes with the downstream adapter MAVS. The polypeptide is E3 ubiquitin-protein ligase RNF123 (Rnf123) (Mus musculus (Mouse)).